Reading from the N-terminus, the 208-residue chain is Uracil phosphoribosyltransferase (208 aa).

5-phospho-alpha-D-ribose 1-diphosphate-binding positions include Arg78, Arg103, and Asp130–Thr138. Uracil is bound by residues Ile193 and Gly198–Ala200. A 5-phospho-alpha-D-ribose 1-diphosphate-binding site is contributed by Asp199.

Belongs to the UPRTase family. Requires Mg(2+) as cofactor.

It catalyses the reaction UMP + diphosphate = 5-phospho-alpha-D-ribose 1-diphosphate + uracil. The protein operates within pyrimidine metabolism; UMP biosynthesis via salvage pathway; UMP from uracil: step 1/1. Its activity is regulated as follows. Allosterically activated by GTP. Catalyzes the conversion of uracil and 5-phospho-alpha-D-ribose 1-diphosphate (PRPP) to UMP and diphosphate. This chain is Uracil phosphoribosyltransferase, found in Campylobacter jejuni (strain RM1221).